The chain runs to 72 residues: Translation initiation factor IF-1 (72 aa).

The S1-like domain maps to 1 to 72 (MAKEDNIEMQ…SKGRIVFRSR (72 aa)).

The protein belongs to the IF-1 family. In terms of assembly, component of the 30S ribosomal translation pre-initiation complex which assembles on the 30S ribosome in the order IF-2 and IF-3, IF-1 and N-formylmethionyl-tRNA(fMet); mRNA recruitment can occur at any time during PIC assembly.

It is found in the cytoplasm. One of the essential components for the initiation of protein synthesis. Stabilizes the binding of IF-2 and IF-3 on the 30S subunit to which N-formylmethionyl-tRNA(fMet) subsequently binds. Helps modulate mRNA selection, yielding the 30S pre-initiation complex (PIC). Upon addition of the 50S ribosomal subunit IF-1, IF-2 and IF-3 are released leaving the mature 70S translation initiation complex. This is Translation initiation factor IF-1 from Salmonella paratyphi A (strain ATCC 9150 / SARB42).